The chain runs to 251 residues: Haloacid dehalogenase-like hydrolase domain-containing protein 3 (251 aa).

Lys-15 bears the N6-acetyllysine; alternate mark. Lys-15 carries the post-translational modification N6-succinyllysine; alternate. Position 130 is an N6-acetyllysine (Lys-130).

The protein belongs to the HAD-like hydrolase superfamily.

The protein is Haloacid dehalogenase-like hydrolase domain-containing protein 3 (Hdhd3) of Mus musculus (Mouse).